Here is a 418-residue protein sequence, read N- to C-terminus: Serine proteinase inhibitor 2.4 (418 aa).

Positions 1 to 28 (MAFIAALGIFMAGICPAVLCFPNGTLGR) are cleaved as a signal peptide. Asn-23, Asn-38, Asn-104, and Asn-269 each carry an N-linked (GlcNAc...) asparagine glycan.

This sequence belongs to the serpin family.

The protein localises to the secreted. This is Serine proteinase inhibitor 2.4 from Apodemus sylvaticus (European woodmouse).